A 365-amino-acid chain; its full sequence is BTB/POZ and TAZ domain-containing protein 1 (365 aa).

Residues 25–96 (TDVEIITSGR…LYSPSVTENE (72 aa)) enclose the BTB domain. The short motif at 193 to 202 (RKKRRRRHRR) is the Nuclear localization signal element. The TAZ-type zinc finger occupies 205–304 (NLYLQLSEAM…SESCRVPLCR (100 aa)). The interval 315 to 338 (KMVEDTKWKVLVRRVASAKAMSSL) is caM-binding.

As to quaternary structure, interacts with CUL3A. Interacts with GTE9/BET9 and GTE11/BET10 through the BTB domain. As to expression, preferentially expressed in young leaves, roots and stems.

Its subcellular location is the nucleus. The protein localises to the cytoplasm. The protein operates within protein modification; protein ubiquitination. In terms of biological role, may act as a substrate-specific adapter of an E3 ubiquitin-protein ligase complex (CUL3-RBX1-BTB) which mediates the ubiquitination and subsequent proteasomal degradation of target proteins. Also targeted for degradation by the 26S proteasome pathway. May be involved in gametophyte development. This chain is BTB/POZ and TAZ domain-containing protein 1 (BT1), found in Arabidopsis thaliana (Mouse-ear cress).